Consider the following 124-residue polypeptide: Small ribosomal subunit protein uS12c (124 aa).

The interval 1-28 is disordered; the sequence is MPTFQQLVRSARKPHAKKTKSPALQGCP. Over residues 10–20 the composition is skewed to basic residues; it reads SARKPHAKKTK.

Belongs to the universal ribosomal protein uS12 family. In terms of assembly, part of the 30S ribosomal subunit.

It is found in the plastid. With S4 and S5 plays an important role in translational accuracy. Located at the interface of the 30S and 50S subunits. This chain is Small ribosomal subunit protein uS12c (rps12), found in Prototheca wickerhamii.